A 436-amino-acid polypeptide reads, in one-letter code: Gamma-glutamyl phosphate reductase (436 aa).

It belongs to the gamma-glutamyl phosphate reductase family.

It is found in the cytoplasm. It catalyses the reaction L-glutamate 5-semialdehyde + phosphate + NADP(+) = L-glutamyl 5-phosphate + NADPH + H(+). Its pathway is amino-acid biosynthesis; L-proline biosynthesis; L-glutamate 5-semialdehyde from L-glutamate: step 2/2. Functionally, catalyzes the NADPH-dependent reduction of L-glutamate 5-phosphate into L-glutamate 5-semialdehyde and phosphate. The product spontaneously undergoes cyclization to form 1-pyrroline-5-carboxylate. This chain is Gamma-glutamyl phosphate reductase, found in Prochlorococcus marinus (strain AS9601).